The following is a 325-amino-acid chain: Geranylgeranyl transferase type-2 subunit beta (325 aa).

6 PFTB repeats span residues 9–50 (KEKH…CVLD), 57–99 (KEEV…ATYD), 109–150 (KVRL…SILG), 157–198 (VDPA…AIAN), 208–249 (LEEI…AIIG), and 256–298 (YEKL…SLMG). Geranylgeranyl diphosphate-binding positions include 183–185 (HAA) and 228–240 (RPSK…YSWW). Zn(2+)-binding residues include Asp-234, Cys-236, and His-286.

Belongs to the protein prenyltransferase subunit beta family. Heterodimer of an alpha and a beta subunit. It depends on Zn(2+) as a cofactor.

The catalysed reaction is geranylgeranyl diphosphate + L-cysteinyl-[protein] = S-geranylgeranyl-L-cysteinyl-[protein] + diphosphate. Functionally, catalyzes the transfer of a geranyl-geranyl moiety from geranyl-geranyl pyrophosphate to proteins having the C-terminal -XCC or -XCXC, where both cysteines may become modified. Acts on YPT1 and SEC4. This chain is Geranylgeranyl transferase type-2 subunit beta (BET2), found in Saccharomyces cerevisiae (strain ATCC 204508 / S288c) (Baker's yeast).